The primary structure comprises 722 residues: Bifunctional UDP-N-acetylglucosamine 2-epimerase/N-acetylmannosamine kinase (722 aa).

UDP contacts are provided by R19, S23, R113, H220, and N253. CMP-N-acetyl-beta-neuraminate is bound by residues K259, E271, K280, and H281. UDP contacts are provided by V282, S301, S302, E307, and R321. The N-acetylmannosamine kinase stretch occupies residues 406 to 722 (TLSALAVDLG…VLDYTTRRIH (317 aa)). D413 is a Mg(2+) binding site. G416 serves as a coordination point for an N-acyl-D-mannosamine 6-phosphate. Residues T417, N418, and R420 each coordinate ADP. Residues G476, R477, T489, N516, D517, and G545 each coordinate an N-acyl-D-mannosamine 6-phosphate. 5 residues coordinate an N-acyl-D-mannosamine: G476, R477, T489, N516, and D517. Residue D517 is part of the active site. An N-acyl-D-mannosamine-binding residues include E566 and H569. An an N-acyl-D-mannosamine 6-phosphate-binding site is contributed by H569. Positions 569, 579, 581, and 586 each coordinate Zn(2+). E588 is an an N-acyl-D-mannosamine 6-phosphate binding site. Residue E588 participates in an N-acyl-D-mannosamine binding.

The protein in the N-terminal section; belongs to the UDP-N-acetylglucosamine 2-epimerase family. In the C-terminal section; belongs to the ROK (NagC/XylR) family. In terms of assembly, homodimer. Homotetramer. Homohexamer. The hexameric form exhibits both enzyme activities, whereas the dimeric form only catalyzes the phosphorylation of N-acyl-D-mannosamine. Phosphorylated. Phosphorylation by PKC activates the UDP-N-acetylglucosamine 2-epimerase activity.

It localises to the cytoplasm. Its subcellular location is the cytosol. The enzyme catalyses UDP-N-acetyl-alpha-D-glucosamine + H2O = aldehydo-N-acetyl-D-mannosamine + UDP + H(+). It catalyses the reaction an N-acyl-D-mannosamine + ATP = an N-acyl-D-mannosamine 6-phosphate + ADP + H(+). It functions in the pathway amino-sugar metabolism; N-acetylneuraminate biosynthesis. With respect to regulation, the UDP-N-acetylglucosamine 2-epimerase activity, in contrast to the N-acetylmannosamine kinase activity, exhibits allosteric regulation by cytidine monophosphate-N-acetylneuraminic acid (CMP-Neu5Ac), the end product of neuraminic acid biosynthesis. Moreover, the activity is contingent upon the oligomeric state of the enzyme. The monomeric form is inactive, while the dimeric form selectively catalyzes the phosphorylation of N-acetylmannosamine. The hexameric form, on the other hand, demonstrates full proficiency in both enzyme activities. Furthermore, the UDP-N-acetylglucosamine 2-epimerase activity is increased by PKC-mediated phosphorylation. In terms of biological role, bifunctional enzyme that possesses both UDP-N-acetylglucosamine 2-epimerase and N-acetylmannosamine kinase activities, and serves as the initiator of the biosynthetic pathway leading to the production of N-acetylneuraminic acid (NeuAc), a critical precursor in the synthesis of sialic acids. By catalyzing this pivotal and rate-limiting step in sialic acid biosynthesis, this enzyme assumes a pivotal role in governing the regulation of cell surface sialylation, playing a role in embryonic angiogenesis. Sialic acids represent a category of negatively charged sugars that reside on the surface of cells as terminal components of glycoconjugates and mediate important functions in various cellular processes, including cell adhesion, signal transduction, and cellular recognition. The sequence is that of Bifunctional UDP-N-acetylglucosamine 2-epimerase/N-acetylmannosamine kinase (GNE) from Cricetulus griseus (Chinese hamster).